We begin with the raw amino-acid sequence, 61 residues long: Conotoxin Cal14.6 (61 aa).

The first 21 residues, 1-21 (MKFLLFLSVALLLTSFIETEA), serve as a signal peptide directing secretion. A propeptide spanning residues 22-38 (GPVNEAGVERLFRALVG) is cleaved from the precursor. At Pro-57 the chain carries 4-hydroxyproline; partial. Proline amide is present on Pro-60.

In terms of processing, contains 2 disulfide bonds. As to expression, expressed by the venom duct.

The protein localises to the secreted. Its function is as follows. Probable neurotoxin with unknown target. Possibly targets ion channels. In Californiconus californicus (California cone), this protein is Conotoxin Cal14.6.